A 485-amino-acid polypeptide reads, in one-letter code: WAS/WASL-interacting protein family member 3 (485 aa).

Residues 1-30 are compositionally biased toward pro residues; that stretch reads MPVPPPPPPPLPPPPPPLGAPPPPPPPGPP. The interval 1–485 is disordered; sequence MPVPPPPPPP…NSQLSLKALR (485 aa). 3 short sequence motifs (profilin-binding motif) span residues 3-8, 11-16, and 20-25; these read VPPPPP, LPPPPP, and APPPPP. A WH2 domain is found at 45-62; the sequence is GRSALLADIQQGTRLRKV. Arginine 46 is modified (asymmetric dimethylarginine). An RLRK motif is present at residues 58–61; that stretch reads RLRK. Polar residues predominate over residues 63-78; the sequence is TQINDRSAPQIESSKG. Phosphoserine is present on serine 150. Composition is skewed to pro residues over residues 165–200 and 207–243; these read PVPPRPSVPAPPPPTTPPPPPPPPPPPPPPPLPPAS and VSPPVPPTKGNPSAVPAPIPCVPPLPPPPPTPPPLPP. Position 208 is a phosphoserine (serine 208). Positions 244 to 259 are enriched in low complexity; that stretch reads ASALSEKAVRPQLAPL. Pro residues-rich tracts occupy residues 260–275 and 293–312; these read HLPPIPPPLPLLPPYG and PPAPPPPPPPPPPPPPPPLP. Residue serine 394 is modified to Phosphoserine. The span at 396-407 shows a compositional bias: polar residues; it reads TTELSSKTQQPG. Residues 417-441 show a composition bias toward basic and acidic residues; that stretch reads VIDDFESKFTFHSMEDFPPPDEYKP. The WASP-binding motif signature appears at 426–450; that stretch reads TFHSMEDFPPPDEYKPGQKIYPSKV. Positions 475 to 485 are enriched in polar residues; it reads RNSQLSLKALR.

This sequence belongs to the verprolin family. In terms of assembly, isoform 1 interacts with WASL (via WH1 domain), and monomeric and filamentous actin. In terms of tissue distribution, detected mainly in brain and at lower levels in heart and lung (at protein level). Also detected in testis but not in kidney, liver or spleen.

It is found in the cytoplasm. May have a role in spermatogenesis. May be a regulator of cytoskeletal organization. The polypeptide is WAS/WASL-interacting protein family member 3 (Wipf3) (Rattus norvegicus (Rat)).